Reading from the N-terminus, the 262-residue chain is Thrombin-like enzyme calobin-1 (262 aa).

Residues 1 to 18 (MVLISVLANLLILQLSYA) form the signal peptide. Positions 19–24 (QKSSEL) are excised as a propeptide. Positions 25–253 (VIGGDECNIN…HLDWIQSIIA (229 aa)) constitute a Peptidase S1 domain. 6 disulfides stabilise this stretch: Cys31/Cys165, Cys52/Cys68, Cys100/Cys260, Cys144/Cys214, Cys176/Cys193, and Cys204/Cys229. The active-site Charge relay system is the His67. An N-linked (GlcNAc...) asparagine glycan is attached at Asn105. Asp112 acts as the Charge relay system in catalysis. Catalysis depends on Ser208, which acts as the Charge relay system.

This sequence belongs to the peptidase S1 family. Snake venom subfamily. In terms of assembly, monomer. Post-translationally, N-glycosylated. In terms of tissue distribution, expressed by the venom gland.

It is found in the secreted. Strongly inhibited by PMSF, and moderately by benzamidine and soybean trypsin inhibitor. Thrombin-like snake venom serine protease. Has a coagulant activity. Acts on alpha-chains of fibrinogen (FGA) generating fibrinopeptide A. This chain is Thrombin-like enzyme calobin-1, found in Gloydius ussuriensis (Ussuri mamushi).